Reading from the N-terminus, the 721-residue chain is WD repeat and coiled-coil-containing protein (721 aa).

At M1 the chain carries N-acetylmethionine. WD repeat units lie at residues 55-98 and 154-194; these read GQFE…MESS and NTQG…LHRC. A phosphoserine mark is found at S299, S468, S501, and S523. The span at 520 to 537 shows a compositional bias: polar residues; it reads QPASLPRHSSTPDHTSTL. Positions 520-553 are disordered; sequence QPASLPRHSSTPDHTSTLEPPRLPQRKNLQSEKE. A Phosphothreonine modification is found at T530. Residues 539-545 are interaction with HCK; that stretch reads PPRLPQR. The stretch at 556 to 584 forms a coiled coil; the sequence is QLSKEVEILSRNLVEMQRCLSELTNRLHN. S686 and S690 each carry phosphoserine.

In terms of assembly, oligomer. Interacts with HCK (via SH3 domain). Phosphorylated on Tyr when associated with HCK.

The sequence is that of WD repeat and coiled-coil-containing protein from Homo sapiens (Human).